The chain runs to 74 residues: Large ribosomal subunit protein bL31 (74 aa).

It belongs to the bacterial ribosomal protein bL31 family. Type A subfamily. Part of the 50S ribosomal subunit.

Binds the 23S rRNA. The chain is Large ribosomal subunit protein bL31 from Chlorobaculum parvum (strain DSM 263 / NCIMB 8327) (Chlorobium vibrioforme subsp. thiosulfatophilum).